Here is a 197-residue protein sequence, read N- to C-terminus: Adenylyl-sulfate kinase (197 aa).

Residue Gly-33 to Ser-40 participates in ATP binding. Ser-107 acts as the Phosphoserine intermediate in catalysis.

This sequence belongs to the APS kinase family.

It catalyses the reaction adenosine 5'-phosphosulfate + ATP = 3'-phosphoadenylyl sulfate + ADP + H(+). Its pathway is sulfur metabolism; hydrogen sulfide biosynthesis; sulfite from sulfate: step 2/3. In terms of biological role, catalyzes the synthesis of activated sulfate. In Bacillus velezensis (strain DSM 23117 / BGSC 10A6 / LMG 26770 / FZB42) (Bacillus amyloliquefaciens subsp. plantarum), this protein is Adenylyl-sulfate kinase.